A 217-amino-acid polypeptide reads, in one-letter code: Ribonuclease HII (217 aa).

The RNase H type-2 domain occupies 16–217; it reads YCIAGVDEVG…VARVLGTYHD (202 aa). Residues aspartate 22, glutamate 23, and aspartate 114 each contribute to the a divalent metal cation site.

The protein belongs to the RNase HII family. The cofactor is Mn(2+). Requires Mg(2+) as cofactor.

It is found in the cytoplasm. It catalyses the reaction Endonucleolytic cleavage to 5'-phosphomonoester.. Functionally, endonuclease that specifically degrades the RNA of RNA-DNA hybrids. The polypeptide is Ribonuclease HII (Colwellia psychrerythraea (strain 34H / ATCC BAA-681) (Vibrio psychroerythus)).